We begin with the raw amino-acid sequence, 368 residues long: Chaperone protein DnaJ (368 aa).

The 65-residue stretch at 5–69 folds into the J domain; that stretch reads DYYEVLGLDK…QKRAQYDRFG (65 aa). The CR-type zinc finger occupies 126 to 208; that stretch reads GKTETIELEI…CHGSGHVKKK (83 aa). Cys-139, Cys-142, Cys-156, Cys-159, Cys-182, Cys-185, Cys-196, and Cys-199 together coordinate Zn(2+). CXXCXGXG motif repeat units lie at residues 139-146, 156-163, 182-189, and 196-203; these read CDTCMGSG, CNRCGGSG, CSQCHGSG, and CPTCHGSG.

It belongs to the DnaJ family. Homodimer. Requires Zn(2+) as cofactor.

Its subcellular location is the cytoplasm. In terms of biological role, participates actively in the response to hyperosmotic and heat shock by preventing the aggregation of stress-denatured proteins and by disaggregating proteins, also in an autonomous, DnaK-independent fashion. Unfolded proteins bind initially to DnaJ; upon interaction with the DnaJ-bound protein, DnaK hydrolyzes its bound ATP, resulting in the formation of a stable complex. GrpE releases ADP from DnaK; ATP binding to DnaK triggers the release of the substrate protein, thus completing the reaction cycle. Several rounds of ATP-dependent interactions between DnaJ, DnaK and GrpE are required for fully efficient folding. Also involved, together with DnaK and GrpE, in the DNA replication of plasmids through activation of initiation proteins. The protein is Chaperone protein DnaJ of Exiguobacterium sp. (strain ATCC BAA-1283 / AT1b).